Reading from the N-terminus, the 576-residue chain is Protein O-linked-mannose beta-1,4-N-acetylglucosaminyltransferase 2 (576 aa).

Topologically, residues 1-4 (MNIS) are cytoplasmic. The chain crosses the membrane as a helical; Signal-anchor for type II membrane protein span at residues 5–25 (AVFNALLVSIMAAVLWKHVKL). Over 26 to 576 (LEQFYVIEEE…PFAEVLVCNT (551 aa)) the chain is Lumenal. 6 N-linked (GlcNAc...) asparagine glycosylation sites follow: Asn-98, Asn-275, Asn-335, Asn-451, Asn-539, and Asn-561. The 95-residue stretch at 482–576 (RESKCQASAQ…PFAEVLVCNT (95 aa)) folds into the Fibronectin type-III domain.

This sequence belongs to the glycosyltransferase 61 family.

It is found in the endoplasmic reticulum membrane. The catalysed reaction is 3-O-(alpha-D-mannosyl)-L-threonyl-[protein] + UDP-N-acetyl-alpha-D-glucosamine = 3-O-(N-acetyl-beta-D-glucosaminyl-(1-&gt;4)-alpha-D-mannosyl)-L-threonyl-[protein] + UDP + H(+). The protein operates within protein modification; protein glycosylation. In terms of biological role, O-linked mannose beta-1,4-N-acetylglucosaminyltransferase that transfers UDP-N-acetyl-D-glucosamine to the 4-position of the mannose to generate N-acetyl-D-glucosamine-beta-1,4-O-D-mannosylprotein. Involved in the biosynthesis of the phosphorylated O-mannosyl trisaccharide (N-acetylgalactosamine-beta-3-N-acetylglucosamine-beta-4-(phosphate-6-)mannose), a carbohydrate structure present in alpha-dystroglycan (DAG1), which is required for binding laminin G-like domain-containing extracellular proteins with high affinity. The sequence is that of Protein O-linked-mannose beta-1,4-N-acetylglucosaminyltransferase 2 (pomgnt2) from Xenopus tropicalis (Western clawed frog).